Reading from the N-terminus, the 132-residue chain is Chemokine-like protein TAFA-5 (132 aa).

An N-terminal signal peptide occupies residues 1–43 (MAPSPRTGSRQDATALPSMSSTFWAFMILASLLIAYCSQLAAG). N113 is a glycosylation site (N-linked (GlcNAc...) asparagine).

The protein belongs to the TAFA family. As to expression, expressed in the subcutaneous and perirenal adipose tissue (at protein level). Highly expressed in adipose tissue with moderate expression in the brain and ovary. Isoform 2: Brain-specific.

It localises to the secreted. Functionally, acts as a chemokine-like protein by regulating cell proliferation and migration through activation of G protein-coupled receptors (GPCRs), such as S1PR2 and FPR2. Stimulates chemotactic migration of macrophages mediated by the MAPK3/ERK1 and AKT1 pathway. Blocks TNFSF11/RANKL-induced osteoclast formation from macrophages by inhibiting up-regulation of osteoclast fusogenic and differentiation genes. Stimulation of macrophage migration and inhibition of osteoclast formation is mediated via GPCR FPR2. Acts as an adipokine by negatively regulating vascular smooth muscle cell (VSMC) proliferation and migration in response to platelet-derived growth factor stimulation via GPCR S1PR2 and G protein GNA12/GNA13-transmitted RHOA signaling. Inhibits injury-induced cell proliferation and neointima formation in the femoral arteries. This Homo sapiens (Human) protein is Chemokine-like protein TAFA-5.